A 243-amino-acid polypeptide reads, in one-letter code: DNA repair protein RecO (243 aa).

This sequence belongs to the RecO family.

In terms of biological role, involved in DNA repair and RecF pathway recombination. The protein is DNA repair protein RecO of Caulobacter vibrioides (strain NA1000 / CB15N) (Caulobacter crescentus).